The following is a 266-amino-acid chain: Putative [LysW]-aminoadipate/[LysW]-glutamate kinase (266 aa).

Substrate is bound by residues 36–37, arginine 63, and asparagine 168; that span reads GG.

It belongs to the acetylglutamate kinase family. LysZ subfamily.

It localises to the cytoplasm. It catalyses the reaction [amino-group carrier protein]-C-terminal-N-(1,4-dicarboxybutan-1-yl)-L-glutamine + ATP = [amino-group carrier protein]-C-terminal-N-(1-carboxy-5-phosphooxy-5-oxopentan-1-yl)-L-glutamine + ADP. The catalysed reaction is [amino-group carrier protein]-C-terminal-gamma-(L-glutamyl)-L-glutamate + ATP = [amino-group carrier protein]-C-terminal-gamma-(5-phospho-L-glutamyl)-L-glutamate + ADP. It participates in amino-acid biosynthesis; L-lysine biosynthesis via AAA pathway; L-lysine from L-alpha-aminoadipate (Thermus route): step 2/5. It functions in the pathway amino-acid biosynthesis; L-arginine biosynthesis. Its function is as follows. Involved in both the arginine and lysine biosynthetic pathways. Phosphorylates the LysW-bound precursors glutamate (for arginine biosynthesis), respectively alpha-aminoadipate (for lysine biosynthesis). This chain is Putative [LysW]-aminoadipate/[LysW]-glutamate kinase, found in Cenarchaeum symbiosum (strain A).